The primary structure comprises 177 residues: Transcription antitermination protein NusB (177 aa).

Positions M1–R35 are disordered. Positions P17–K28 are enriched in low complexity.

This sequence belongs to the NusB family.

Functionally, involved in transcription antitermination. Required for transcription of ribosomal RNA (rRNA) genes. Binds specifically to the boxA antiterminator sequence of the ribosomal RNA (rrn) operons. This is Transcription antitermination protein NusB from Acidovorax sp. (strain JS42).